The chain runs to 339 residues: Glycerol-3-phosphate dehydrogenase [NAD(P)+] (339 aa).

NADPH is bound by residues serine 15, tyrosine 16, histidine 36, and lysine 110. Residues lysine 110, glycine 139, and threonine 141 each coordinate sn-glycerol 3-phosphate. An NADPH-binding site is contributed by alanine 143. Sn-glycerol 3-phosphate-binding residues include lysine 195, aspartate 248, serine 258, arginine 259, and asparagine 260. The active-site Proton acceptor is the lysine 195. Arginine 259 contributes to the NADPH binding site. Residues valine 283 and glutamate 285 each contribute to the NADPH site.

Belongs to the NAD-dependent glycerol-3-phosphate dehydrogenase family.

It is found in the cytoplasm. It catalyses the reaction sn-glycerol 3-phosphate + NAD(+) = dihydroxyacetone phosphate + NADH + H(+). It carries out the reaction sn-glycerol 3-phosphate + NADP(+) = dihydroxyacetone phosphate + NADPH + H(+). The protein operates within membrane lipid metabolism; glycerophospholipid metabolism. Catalyzes the reduction of the glycolytic intermediate dihydroxyacetone phosphate (DHAP) to sn-glycerol 3-phosphate (G3P), the key precursor for phospholipid synthesis. The polypeptide is Glycerol-3-phosphate dehydrogenase [NAD(P)+] (Klebsiella pneumoniae (strain 342)).